The primary structure comprises 1564 residues: Abnormal spindle-like microcephaly-associated protein homolog (1564 aa).

IQ domains lie at 31–60 (YLWA…MLKS), 220–251 (LKKN…VIIQ), 270–299 (TRSA…SVIK), 293–322 (ILTS…ATIK), 366–395 (MRES…AVIS), 389–420 (QRKA…IIIQ), 439–468 (VKKA…AAVK), 462–491 (QSVA…SIIK), 512–541 (AKAA…AAMK), 535–566 (EHQA…LVIQ), 608–639 (QHTC…LLIQ), 658–687 (TKAA…AAIT), 681–712 (CNTA…IIIQ), 731–762 (LKKT…TFIK), 754–785 (MHRA…IVIQ), 804–835 (ILKA…TLIQ), 827–856 (LRIA…ITRT), 877–908 (LRHS…TLIQ), 900–931 (MHIA…IWIQ), 949–980 (LQNA…AFIQ), 972–1003 (MHRA…VVIQ), 1022–1053 (QRYS…ILIQ), 1045–1076 (MYFS…IFIQ), 1095–1126 (LRKA…VLIQ), 1168–1199 (QWHS…IIIQ), 1304–1333 (HTQA…AATR), 1327–1358 (MHLA…VIIQ), 1377–1406 (VQKS…EKMA), 1452–1483 (QSRA…RIQS), 1474–1503 (QKCA…QKRA), and 1500–1531 (QKRA…VVLQ).

The protein localises to the cytoplasm. It is found in the nucleus. Its function is as follows. Probable role in mitotic spindle regulation and coordination of mitotic processes. May have a preferential role in regulating neurogenesis. This Ateles geoffroyi (Black-handed spider monkey) protein is Abnormal spindle-like microcephaly-associated protein homolog (ASPM).